We begin with the raw amino-acid sequence, 552 residues long: FERRY endosomal RAB5 effector complex subunit 3 (552 aa).

The residue at position 79 (serine 79) is a Phosphoserine.

Component of the FERRY complex composed of five subunits, TBCK, PPP1R21, FERRY3, CRYZL1 and GATD1 with a ratio of 1:2:1:2:4, respectively.

It localises to the cytoplasm. It is found in the early endosome. Its function is as follows. Component of the FERRY complex (Five-subunit Endosomal Rab5 and RNA/ribosome intermediary). The FERRY complex directly interacts with mRNAs and RAB5A, and functions as a RAB5A effector involved in the localization and the distribution of specific mRNAs most likely by mediating their endosomal transport. The complex recruits mRNAs and ribosomes to early endosomes through direct mRNA-interaction. Plays a role in mast cell degranulation. The chain is FERRY endosomal RAB5 effector complex subunit 3 from Mus musculus (Mouse).